A 464-amino-acid polypeptide reads, in one-letter code: Fumarate hydratase class II (464 aa).

Residues 98–100, 129–132, 139–141, and Thr187 each bind substrate; these read SGT, HPND, and SSN. His188 functions as the Proton donor/acceptor in the catalytic mechanism. Ser318 is an active-site residue. Residues Ser319 and 324–326 each bind substrate; that span reads KVN.

It belongs to the class-II fumarase/aspartase family. Fumarase subfamily. In terms of assembly, homotetramer.

Its subcellular location is the cytoplasm. It carries out the reaction (S)-malate = fumarate + H2O. It functions in the pathway carbohydrate metabolism; tricarboxylic acid cycle; (S)-malate from fumarate: step 1/1. In terms of biological role, involved in the TCA cycle. Catalyzes the stereospecific interconversion of fumarate to L-malate. The polypeptide is Fumarate hydratase class II (Wigglesworthia glossinidia brevipalpis).